A 241-amino-acid chain; its full sequence is uncharacterized protein (241 aa).

This is an uncharacterized protein from Pasteurella multocida (strain Pm70).